Consider the following 398-residue polypeptide: tRNA pseudouridine synthase D (398 aa).

D76 (nucleophile) is an active-site residue. Positions G151–I360 constitute a TRUD domain.

The protein belongs to the pseudouridine synthase TruD family.

The catalysed reaction is uridine(13) in tRNA = pseudouridine(13) in tRNA. Responsible for synthesis of pseudouridine from uracil-13 in transfer RNAs. This Syntrophotalea carbinolica (strain DSM 2380 / NBRC 103641 / GraBd1) (Pelobacter carbinolicus) protein is tRNA pseudouridine synthase D.